Here is a 297-residue protein sequence, read N- to C-terminus: Protein MIZU-KUSSEI 1 (297 aa).

As to expression, expressed in root meristematic region, cortical cells, lateral root cap cells, columella cells of the root cap, mature region of the roots and leaf hydathodes.

The protein resides in the endoplasmic reticulum membrane. In terms of biological role, plays a role in lateral root development by maintaining auxin levels. This function requires GNOM (GN/MIZ2) activity. Negatively regulates cytokinin sensitivity on root development. Positively regulates hydrotropism in roots. The sequence is that of Protein MIZU-KUSSEI 1 (MIZ1) from Arabidopsis thaliana (Mouse-ear cress).